Consider the following 756-residue polypeptide: Catalase-peroxidase (756 aa).

The signal sequence occupies residues 1-26 (MKGKTVNKQTLAALVSALLVFNPAVA). The tryptophyl-tyrosyl-methioninium (Trp-Tyr) (with M-274) cross-link spans 126 to 248 (WHSAGTYRTL…LGATHMGLIY (123 aa)). His127 (proton acceptor) is an active-site residue. The segment at residues 248–274 (YVNPEGPKGVPDPLGSAKNIRTAFSRM) is a cross-link (tryptophyl-tyrosyl-methioninium (Tyr-Met) (with W-126)). His289 is a heme b binding site.

This sequence belongs to the peroxidase family. Peroxidase/catalase subfamily. Homodimer or homotetramer. Heme b serves as cofactor. Post-translationally, formation of the three residue Trp-Tyr-Met cross-link is important for the catalase, but not the peroxidase activity of the enzyme.

The enzyme catalyses H2O2 + AH2 = A + 2 H2O. It carries out the reaction 2 H2O2 = O2 + 2 H2O. In terms of biological role, bifunctional enzyme with both catalase and broad-spectrum peroxidase activity. In Shewanella loihica (strain ATCC BAA-1088 / PV-4), this protein is Catalase-peroxidase.